The sequence spans 871 residues: MEKQTGELDLEFFLNSGFEKKQCIKCGSYFWTQDKERNTCGDTPCDEYTFIGNSPVPKSYSLSEMRDAFIKFFEKRGHKFLKPYPVVPRWREDVLLVNASIYDFQPHVTSGIVRPPGNPIVMSQPSIRMNDVDLVGITGRHLTSFEMLCHDSFNTKDKTVYWKEETVHYCYDFLTEGLGIDGKLISFKEKPWSGGGNAGNALEVFVRGLEVATLVFMDMKEDPNGPYEIDGIRYSKMDMRIVDTGYGLERLTWLSQGTPTVYQAIYPDIIQHVMKNSSVSDIDEEFLSEVVKASVMKEPYEESFVISQLEKRYPDARQRFEEIKKVRDVFLMIDHARSLMHMFAAYVIPSNVKVGYLARMLIRRAYRAISNTGYRGSLMDLIRMNHEDLKDIVPDFPEQFVSDVLSIEEEKYRDVERHGTQIIDKMISNKGKLSLDDLVLLYDSHGISPETVKAYLETKGMEIDVPDNFHAIVIKRHEKGETEKKKYSDYPEIETRTLYYDDPFMREFTGLVLFSKGNEIILDKTAFYPEGGGQPWDLGYFEYKGKRINVVAVRKYGKTIVHTLDGEIPQGVRVHGVIDWERRSRLMVHHTSTHLLLGVLREVLGEHVWQNGVQKDVEESRLDITHYRKIDEETIRKIEERVFDLIREGREVSVRNLDWYSAIDKYGFRLFEGGVPLTPKIRVVEIQGVDAEGCGGTHLKNISSIGVLKIRKVEAIQENIYRITFSAGVPALHLFQESYEASYGISTLLKKPIEEIAQSVSELSKGYADLRRSLAEARRRDIENRIANAKKIGTPGAEYPIIEADDADIGEISRIAHSRKVDLIVETRIAGKFKYTAISPSKKARDMIRKLFNADPEGNDSMASYINEYSE.

Zn(2+)-binding residues include His-590, His-594, Cys-694, and His-698.

This sequence belongs to the class-II aminoacyl-tRNA synthetase family. It depends on Zn(2+) as a cofactor.

It localises to the cytoplasm. The enzyme catalyses tRNA(Ala) + L-alanine + ATP = L-alanyl-tRNA(Ala) + AMP + diphosphate. In terms of biological role, catalyzes the attachment of alanine to tRNA(Ala) in a two-step reaction: alanine is first activated by ATP to form Ala-AMP and then transferred to the acceptor end of tRNA(Ala). Also edits incorrectly charged Ser-tRNA(Ala) and Gly-tRNA(Ala) via its editing domain. The polypeptide is Alanine--tRNA ligase (Thermoplasma acidophilum (strain ATCC 25905 / DSM 1728 / JCM 9062 / NBRC 15155 / AMRC-C165)).